A 610-amino-acid chain; its full sequence is Nuclear factor 7, ovary (610 aa).

One can recognise a Tudor-knot domain in the interval 21–75 (NVGSTYPCKRSDGSQHDADIVKTRYNKQAGREEYYVHYVGLNRRQNEWVDKSRLV). Positions 79–127 (PPKEVETNGTDQEEMTEPTEQPDSKTPQKRKLEEPEPEPKKAKVEDKDA) are disordered. The residue at position 104 (Thr-104) is a Phosphothreonine; by CDK1. Over residues 108-127 (RKLEEPEPEPKKAKVEDKDA) the composition is skewed to basic and acidic residues. The RING-type zinc finger occupies 146 to 186 (CPLCVELFKDPVMVACGHNFCRSCIDKVWEGQSSFACPECK). The B box-type zinc finger occupies 220-261 (RPLEKCSEHDERLKLYCKDDGTLGCVICRDSLKHASHNFLPI). Zn(2+) contacts are provided by Cys-225, His-228, Cys-247, and His-253. Positions 295-374 (DKIEQHNKNV…AKERMEETDS (80 aa)) form a coiled coil. The B30.2/SPRY domain occupies 415-610 (PIQYIMWKEL…VDALRFVHNQ (196 aa)).

As to quaternary structure, monomer. Abundant in oocytes. At the neurula stage, low expression in dorsal embryo region including neural folds and somites.

It is found in the nucleus. Transcription factor that determines dorsal-ventral body axis. The sequence is that of Nuclear factor 7, ovary from Xenopus laevis (African clawed frog).